We begin with the raw amino-acid sequence, 218 residues long: UPF0598 protein C8orf82 homolog (218 aa).

The protein belongs to the UPF0598 family.

The protein is UPF0598 protein C8orf82 homolog of Bos taurus (Bovine).